Consider the following 396-residue polypeptide: Exodeoxyribonuclease 7 large subunit (396 aa).

It belongs to the XseA family. In terms of assembly, heterooligomer composed of large and small subunits.

It is found in the cytoplasm. It catalyses the reaction Exonucleolytic cleavage in either 5'- to 3'- or 3'- to 5'-direction to yield nucleoside 5'-phosphates.. In terms of biological role, bidirectionally degrades single-stranded DNA into large acid-insoluble oligonucleotides, which are then degraded further into small acid-soluble oligonucleotides. The sequence is that of Exodeoxyribonuclease 7 large subunit from Clostridium tetani (strain Massachusetts / E88).